Reading from the N-terminus, the 328-residue chain is Probable fused nickel transport protein LarMN (328 aa).

Transmembrane regions (helical) follow at residues 8–28 (LSPA…TVAV), 42–62 (LPML…NLPI), 75–95 (LLAV…TLLL), 103–123 (GGIL…PFVG), 138–158 (LGLA…AGIE), 187–207 (MLTA…LLVF), 229–249 (PWIA…LASN), and 296–316 (PVSV…LLLI).

Belongs to the CbiM family. NikM subfamily. May form an energy-coupling factor (ECF) transporter complex composed of an ATP-binding protein (A component, LarO), a transmembrane protein (T component, LarQ) and a fused possible substrate-capture protein (S component, LarMN) of unknown stoichiometry.

Its subcellular location is the cell membrane. In terms of biological role, probably part of the energy-coupling factor (ECF) transporter complex LarMNQO involved in nickel import. The protein is Probable fused nickel transport protein LarMN of Lactiplantibacillus plantarum (strain ATCC BAA-793 / NCIMB 8826 / WCFS1) (Lactobacillus plantarum).